Reading from the N-terminus, the 161-residue chain is Fatty acid-binding protein homolog 2 (161 aa).

Residues 1–19 (MSSKFLILLAFCGATLVAA) form the signal peptide.

Belongs to the calycin superfamily. Fatty-acid binding protein (FABP) family.

It localises to the secreted. May play a role in sequestering potentially toxic fatty acids and their peroxidation products, or it may be involved in the maintenance of the impermeable lipid layer of the eggshell. The polypeptide is Fatty acid-binding protein homolog 2 (lbp-2) (Caenorhabditis elegans).